The sequence spans 163 residues: Ribonuclease H (163 aa).

Residues 16–157 (TTSPVEIYCD…CDSLARQAIT (142 aa)) form the RNase H type-1 domain. Positions 25, 63, 85, and 149 each coordinate Mg(2+).

This sequence belongs to the RNase H family. Monomer. Mg(2+) serves as cofactor.

The protein localises to the cytoplasm. It carries out the reaction Endonucleolytic cleavage to 5'-phosphomonoester.. In terms of biological role, endonuclease that specifically degrades the RNA of RNA-DNA hybrids. The chain is Ribonuclease H from Pelobacter propionicus (strain DSM 2379 / NBRC 103807 / OttBd1).